The following is a 429-amino-acid chain: Zinc metalloproteinase nas-17 (429 aa).

The first 21 residues, 1–21 (MFLRPSTLLLTLFLALVAGSA), serve as a signal peptide directing secretion. N-linked (GlcNAc...) asparagine glycosylation is present at Asn-54. The region spanning 62–251 (RQITKIWKKW…VNINVRYSCG (190 aa)) is the Peptidase M12A domain. Intrachain disulfides connect Cys-104/Cys-250, Cys-125/Cys-144, Cys-252/Cys-272, and Cys-274/Cys-283. Residue His-152 coordinates Zn(2+). The active site involves Glu-153. 2 residues coordinate Zn(2+): His-156 and His-162. An EGF-like domain is found at 245–284 (NVRYSCGCAKSLTCENGGYTNPSNCATCVCPTGFAGTLCN).

The cofactor is Zn(2+).

Its subcellular location is the secreted. Metalloprotease. The protein is Zinc metalloproteinase nas-17 (nas-17) of Caenorhabditis elegans.